We begin with the raw amino-acid sequence, 1018 residues long: DNA polymerase gamma (1018 aa).

It belongs to the DNA polymerase type-A family. Mg(2+) is required as a cofactor.

It is found in the mitochondrion. The enzyme catalyses DNA(n) + a 2'-deoxyribonucleoside 5'-triphosphate = DNA(n+1) + diphosphate. Its function is as follows. Involved in the replication of mitochondrial DNA. This chain is DNA polymerase gamma (mip1), found in Schizosaccharomyces pombe (strain 972 / ATCC 24843) (Fission yeast).